Consider the following 372-residue polypeptide: Serine protease inhibitor 42Dd (372 aa).

Residues 1–15 (MYYLCIFLWVTSVAC) form the signal peptide. Residues Asn-197 and Asn-232 are each glycosylated (N-linked (GlcNAc...) asparagine).

It belongs to the serpin family. As to expression, expressed in the ovary.

It localises to the secreted. Its function is as follows. Serine protease inhibitor with activity toward trypsin. Involved in innate immunity to fungal infection by negatively regulating the Toll signaling pathway and suppressing the expression of the antifungal peptide drosomycin. Acts upstream of SPE and grass, and downstream of the fungal cell wall pattern recognition receptor GNBP3. May function specifically in the GNBP3-dependent beta-1,3-glucan branch of the Toll pathway. This is Serine protease inhibitor 42Dd from Drosophila melanogaster (Fruit fly).